A 461-amino-acid chain; its full sequence is Argininosuccinate lyase (461 aa).

This sequence belongs to the lyase 1 family. Argininosuccinate lyase subfamily.

Its subcellular location is the cytoplasm. It catalyses the reaction 2-(N(omega)-L-arginino)succinate = fumarate + L-arginine. It functions in the pathway amino-acid biosynthesis; L-arginine biosynthesis; L-arginine from L-ornithine and carbamoyl phosphate: step 3/3. This Chlorobium luteolum (strain DSM 273 / BCRC 81028 / 2530) (Pelodictyon luteolum) protein is Argininosuccinate lyase.